Here is a 389-residue protein sequence, read N- to C-terminus: Chalcone synthase 2 (389 aa).

The active site involves Cys164.

The protein belongs to the thiolase-like superfamily. Chalcone/stilbene synthases family.

It carries out the reaction (E)-4-coumaroyl-CoA + 3 malonyl-CoA + 3 H(+) = 2',4,4',6'-tetrahydroxychalcone + 3 CO2 + 4 CoA. It participates in secondary metabolite biosynthesis; flavonoid biosynthesis. Functionally, the primary product of this enzyme is 4,2',4',6'-tetrahydroxychalcone (also termed naringenin-chalcone or chalcone) which can under specific conditions spontaneously isomerize into naringenin. The polypeptide is Chalcone synthase 2 (CHS2) (Pisum sativum (Garden pea)).